We begin with the raw amino-acid sequence, 326 residues long: Interleukin-1-binding protein (326 aa).

Positions 1–18 (MSILPVIFLSIFFYSSFV) are cleaved as a signal peptide. Ig-like domains follow at residues 24–115 (PECI…LNLT), 122–212 (SNID…RIVK), and 221–322 (PSTM…KTVT). A disulfide bridge links Cys48 with Cys99. Residues Asn80, Asn103, and Asn113 are each glycosylated (N-linked (GlcNAc...) asparagine; by host). A disulfide bridge links Cys143 with Cys194. Asn206 and Asn237 each carry an N-linked (GlcNAc...) asparagine; by host glycan. A disulfide bond links Cys242 and Cys309.

This sequence belongs to the interleukin-1 receptor family. Interacts with mouse Il1b.

Its subcellular location is the secreted. Its function is as follows. May reduce the host inflammatory response by interacting with inteleukin-1 beta (Il1b) and thus decreasing the association between IL1B and its cellular receptor. The polypeptide is Interleukin-1-binding protein (OPG201) (Vaccinia virus (strain Western Reserve) (VACV)).